The sequence spans 301 residues: GTPase Era (301 aa).

In terms of domain architecture, Era-type G spans 7–175 (YCGFIAIVGR…AGIVRKHLPE (169 aa)). The interval 15 to 22 (GRPNVGKS) is G1. 15–22 (GRPNVGKS) provides a ligand contact to GTP. The interval 41–45 (QTTRH) is G2. The segment at 62-65 (DTPG) is G3. Residues 62-66 (DTPGL) and 124-127 (NKVD) each bind GTP. The G4 stretch occupies residues 124–127 (NKVD). A G5 region spans residues 154-156 (ISA). The KH type-2 domain maps to 206 to 283 (LGAELPYSVT…HLELWVKVKS (78 aa)).

This sequence belongs to the TRAFAC class TrmE-Era-EngA-EngB-Septin-like GTPase superfamily. Era GTPase family. Monomer.

It is found in the cytoplasm. The protein localises to the cell inner membrane. In terms of biological role, an essential GTPase that binds both GDP and GTP, with rapid nucleotide exchange. Plays a role in 16S rRNA processing and 30S ribosomal subunit biogenesis and possibly also in cell cycle regulation and energy metabolism. The sequence is that of GTPase Era from Salmonella heidelberg (strain SL476).